Reading from the N-terminus, the 307-residue chain is Agmatinase (307 aa).

Residues histidine 128, aspartate 151, histidine 153, aspartate 155, aspartate 232, and aspartate 234 each coordinate Mn(2+).

The protein belongs to the arginase family. Agmatinase subfamily. It depends on Mn(2+) as a cofactor.

The catalysed reaction is agmatine + H2O = urea + putrescine. The protein operates within amine and polyamine biosynthesis; putrescine biosynthesis via agmatine pathway; putrescine from agmatine: step 1/1. In terms of biological role, catalyzes the formation of putrescine from agmatine. The chain is Agmatinase from Photorhabdus laumondii subsp. laumondii (strain DSM 15139 / CIP 105565 / TT01) (Photorhabdus luminescens subsp. laumondii).